The sequence spans 243 residues: Terpene cyclase nodB (243 aa).

3 consecutive transmembrane segments (helical) span residues 19 to 39 (ISDIFVFGMGVCWLINYAGMI), 50 to 70 (MAPLALCCNFAWEMVYGLIYP), and 75 to 95 (IEQGVFLAGLVVNLGVMYTAI). Asn111 carries N-linked (GlcNAc...) asparagine glycosylation. The next 4 membrane-spanning stretches (helical) occupy residues 112-132 (ITLIFALGVLGSLTGHLALAA), 134-154 (IGPALGYSWGAVACQLLLSVG), 169-189 (SYTLWLSRFIGSGCVVGFAIL), and 205-225 (LVLWSLGVFIAVDSLYGICLW).

The protein belongs to the paxB family.

It is found in the membrane. It participates in secondary metabolite biosynthesis. Terpene cyclase; part of the gene cluster that mediates the biosynthesis of the indole diterpenes nodulisporic acids (NA). Nodulisporic acid A (NAA) and its chemically modified derivatives are of particular significance because of their highly potent insecticidal activity against blood-feeding arthropods and lack of observable adverse effects on mammals, in particular the tremogenicity associated with the paspaline-derived IDTs is not observed. The geranylgeranyl diphosphate (GGPP) synthase ggs1, localized outside of the cluster, is proposed to catalyze the first step in nodulisporic acid biosynthesis via conversion of farnesyl pyrophosphate and isopentyl pyrophosphate into geranylgeranyl pyrophosphate (GGPP). Condensation of indole-3-glycerol phosphate with GGPP by the prenyl transferase nodC then forms 3-geranylgeranylindole (3-GGI). Epoxidation by the FAD-dependent monooxygenase nodM leads to a single-epoxidized-GGI that is substrate of the terpene cyclase nodB for cyclization to yield emindole SB. The terminal methyl carbon, C28, of emindole SB is then oxidized by the cytochrome P450 monooxygenase nodW to produce nodulisporic acid F (NAF), the pentacyclic core of NAA. NAF is converted to nodulisporic acid E (NAE) via prenylation. This step is probably performed by one of the indole diterpene prenyltransferases nodD1 or nodD2. Several oxidation steps performed by the FAD-linked oxidoreductase nodO and one of the cytochrome P450 monooxygenase nodR, nodX or nodZ further convert NAE to nodulisporic acid D (NAD). NAD is substrate of cytochrome P450 monooxygenase nodJ to produce the precursor of nodulisporic acid C (NAC), converted to NAC by one of the indole diterpene prenyltransferases nodD1 or nodD2. The FAD-dependent monooxygenase nodY2 then oxidizes NAC to nodulisporic acid B (NAB). Finally NAB is converted to NAA by one of the cytochrome P450 monooxygenases nodR, nodX or nodZ. The polypeptide is Terpene cyclase nodB (Hypoxylon pulicicidum).